A 151-amino-acid chain; its full sequence is MSDWDTNTIIGSRARAGGSGPRANVARSQGQINAARRQGLVVSVDKKYGSTNTRGDNEGQRLTKVDRETDIVKPKKLDPNVGRAISRARTDKKMSQKDLATKINEKPTVVNDYEAARAIPNQQVLSKLERALGVKLRGNNIGSPLGAPKKK.

2 disordered regions span residues methionine 1–glutamine 29 and aspartate 78–aspartate 98. The interval valine 41 to isoleucine 119 is essential for TBP-binding. In terms of domain architecture, HTH cro/C1-type spans isoleucine 85 to asparagine 139. The span at alanine 88–aspartate 98 shows a compositional bias: basic and acidic residues. Positions glutamine 96 to alanine 115 form a DNA-binding region, H-T-H motif. The residue at position 143 (serine 143) is a Phosphoserine.

It belongs to the MBF1 family. As to quaternary structure, interacts with TBP and the transcription factor GCN4. Interacts with RPS3/us3.

Its subcellular location is the cytoplasm. The protein resides in the nucleus. Transcriptional coactivator that stimulates GCN4-dependent transcriptional activity by bridging the DNA-binding region of GCN4 and TBP (SPT15), thereby recruiting TBP to GCN4-bound promoters. Involved in induction of the ribosome quality control (RQC) pathway; a pathway that degrades nascent peptide chains during problematic translation. Required to prevent stalled ribosomes from frameshifting. The protein is Multiprotein-bridging factor 1 (MBF1) of Saccharomyces cerevisiae (strain ATCC 204508 / S288c) (Baker's yeast).